Here is a 305-residue protein sequence, read N- to C-terminus: Probable 5-dehydro-4-deoxyglucarate dehydratase (305 aa).

It belongs to the DapA family.

It catalyses the reaction 5-dehydro-4-deoxy-D-glucarate + H(+) = 2,5-dioxopentanoate + CO2 + H2O. It functions in the pathway carbohydrate acid metabolism; D-glucarate degradation; 2,5-dioxopentanoate from D-glucarate: step 2/2. In Xanthomonas campestris pv. campestris (strain B100), this protein is Probable 5-dehydro-4-deoxyglucarate dehydratase.